Here is a 648-residue protein sequence, read N- to C-terminus: Threonine--tRNA ligase (648 aa).

The region spanning 1–63 is the TGS domain; it reads MAQISLTFPD…HADATIAIHT (63 aa). A catalytic region spans residues 247–544; it reads DHRKLGREMD…LIENSAGKLP (298 aa). Cys-344, His-395, and His-521 together coordinate Zn(2+).

This sequence belongs to the class-II aminoacyl-tRNA synthetase family. In terms of assembly, homodimer. The cofactor is Zn(2+).

The protein resides in the cytoplasm. It carries out the reaction tRNA(Thr) + L-threonine + ATP = L-threonyl-tRNA(Thr) + AMP + diphosphate + H(+). Catalyzes the attachment of threonine to tRNA(Thr) in a two-step reaction: L-threonine is first activated by ATP to form Thr-AMP and then transferred to the acceptor end of tRNA(Thr). Also edits incorrectly charged L-seryl-tRNA(Thr). This chain is Threonine--tRNA ligase, found in Roseobacter denitrificans (strain ATCC 33942 / OCh 114) (Erythrobacter sp. (strain OCh 114)).